Here is a 362-residue protein sequence, read N- to C-terminus: Ferrochelatase (362 aa).

Fe cation is bound by residues His-228 and Glu-309.

It belongs to the ferrochelatase family.

The protein resides in the cytoplasm. The catalysed reaction is heme b + 2 H(+) = protoporphyrin IX + Fe(2+). It functions in the pathway porphyrin-containing compound metabolism; protoheme biosynthesis; protoheme from protoporphyrin-IX: step 1/1. Catalyzes the ferrous insertion into protoporphyrin IX. The chain is Ferrochelatase from Bordetella bronchiseptica (strain ATCC BAA-588 / NCTC 13252 / RB50) (Alcaligenes bronchisepticus).